Reading from the N-terminus, the 189-residue chain is GTP cyclohydrolase 1 (189 aa).

Cysteine 79, histidine 82, and cysteine 150 together coordinate Zn(2+).

The protein belongs to the GTP cyclohydrolase I family. As to quaternary structure, homomer.

It carries out the reaction GTP + H2O = 7,8-dihydroneopterin 3'-triphosphate + formate + H(+). It functions in the pathway cofactor biosynthesis; 7,8-dihydroneopterin triphosphate biosynthesis; 7,8-dihydroneopterin triphosphate from GTP: step 1/1. This Rickettsia peacockii (strain Rustic) protein is GTP cyclohydrolase 1.